The following is a 290-amino-acid chain: Alpha-mannosidase (290 aa).

Asp17 functions as the Nucleophile in the catalytic mechanism. The N-linked (GlcNAc...) asparagine glycan is linked to Asn64.

This sequence belongs to the glycosyl hydrolase 38 family. As to quaternary structure, dimer. It depends on Zn(2+) as a cofactor.

It carries out the reaction Hydrolysis of terminal, non-reducing alpha-D-mannose residues in alpha-D-mannosides.. With respect to regulation, inhibited by swainsonine but not by 1-desoxymannojirimycin. Functionally, liberates mannose from p-nitrophenyl-alpha-D-mannoside. The sequence is that of Alpha-mannosidase from Lablab purpureus (Hyacinth bean).